Consider the following 173-residue polypeptide: CKLF-like MARVEL transmembrane domain-containing protein 8 (173 aa).

An MARVEL domain is found at 36–168; the sequence is FLRTPPGLLI…NTYFSFIAWR (133 aa). 4 helical membrane passes run 41 to 61, 70 to 90, 105 to 125, and 147 to 167; these read PGLLIVAEIVLGLLVWTLIAG, FGWVMFVAVFYWVLTVFFLIV, TTVGLCFNGSAFVLYFSAAIV, and FFAFLVTICYAGNTYFSFIAW.

It belongs to the chemokine-like factor family.

It localises to the membrane. The polypeptide is CKLF-like MARVEL transmembrane domain-containing protein 8 (Cmtm8) (Mus musculus (Mouse)).